Reading from the N-terminus, the 423-residue chain is Pre-mRNA polyadenylation factor fip-1 (423 aa).

Over residues 1–11 (MDIDEDEDFYA) the composition is skewed to acidic residues. Disordered stretches follow at residues 1 to 178 (MDID…PVRT), 278 to 307 (GPGG…GGPG), and 360 to 423 (PGGG…GRRW). Residues 19-61 (PPTTAATTTTPATTTTTAAPTTTTTTTSTTTASAPPTTTSSST) show a composition bias toward low complexity. A compositionally biased stretch (acidic residues) spans 65-90 (DELEEGEEEDEGGGAMDEDDDSDIDI). The segment covering 135–146 (GTNSNSNSSSNK) has biased composition (low complexity). A compositionally biased stretch (gly residues) spans 360-415 (PGGGPGGPGTGGMGPGGPGGQGGQGQQFGGGFGGNQGQGGYGGYDQMGGAGGGGRG).

Belongs to the FIP1 family.

The protein resides in the nucleus. Pre-mRNA polyadenylation factor that directly interacts with poly(A) polymerase. This chain is Pre-mRNA polyadenylation factor fip-1 (fip-1), found in Neurospora crassa (strain ATCC 24698 / 74-OR23-1A / CBS 708.71 / DSM 1257 / FGSC 987).